The primary structure comprises 623 residues: Prothrombin (623 aa).

The N-terminal stretch at 1–24 (MAHVGGLWLHGCLALAVLVSLVHS) is a signal peptide. A propeptide spanning residues 25–43 (QHVFMAPQQALSLLQRARR) is cleaved from the precursor. The region spanning 44–90 (ANSGFFEEMRKGNLERECVEEQCSREEAYEALESPSETDAFWAKYTA) is the Gla domain. 4-carboxyglutamate occurs at positions 50, 51, 58, 60, 63, 64, 69, 70, 73, and 76. Cysteines 61 and 66 form a disulfide. 11 disulfides stabilise this stretch: cysteine 91–cysteine 104, cysteine 109–cysteine 187, cysteine 130–cysteine 170, cysteine 158–cysteine 182, cysteine 214–cysteine 292, cysteine 235–cysteine 275, cysteine 263–cysteine 287, cysteine 337–cysteine 483, cysteine 392–cysteine 408, cysteine 537–cysteine 551, and cysteine 565–cysteine 595. 2 Kringle domains span residues 108 to 187 (NCAE…IPVC) and 213 to 292 (TCVP…LDYC). N-linked (GlcNAc...) asparagine glycans are attached at residues asparagine 120 and asparagine 144. The region spanning 365–619 (IVEGSDAEIG…LKKWMQKVID (255 aa)) is the Peptidase S1 domain. Histidine 407 acts as the Charge relay system in catalysis. An N-linked (GlcNAc...) asparagine glycan is attached at asparagine 417. Aspartate 463 serves as the catalytic Charge relay system. The tract at residues 552–574 (AGYKPDEGKRGDACEGDSGGPFV) is high affinity receptor-binding region which is also known as the TP508 peptide. The active-site Charge relay system is serine 569.

This sequence belongs to the peptidase S1 family. Heterodimer (named alpha-thrombin) of a light and a heavy chain; disulfide-linked. Forms a heterodimer with SERPINA5. In plasma, interacts (via N-terminus) with alpha-1-microglobulin; this interaction does not prevent the activation of prothrombin to thrombin. In terms of processing, the gamma-carboxyglutamyl residues, which bind calcium ions, result from the carboxylation of glutamyl residues by a microsomal enzyme, the vitamin K-dependent carboxylase. The modified residues are necessary for the calcium-dependent interaction with a negatively charged phospholipid surface, which is essential for the conversion of prothrombin to thrombin. Post-translationally, in the penultimate step of the coagulation cascade, prothrombin is converted to thrombin by the prothrombinase complex composed of factor Xa (F10), cofactor Va (F5), and phospholipids. This activation requires factor Xa-catalyzed sequential cleavage at 2 sites, Arg-315 and Arg-364, along 2 possible pathways. In the first pathway, the first cleavage occurs at Arg-315, leading to the formation of the inactive intermediate prethrombin-2. This pathway preferentially occurs on platelets and in the absence of cofactor Va. In the second pathway, the first cleavage occurs at Arg-364, which separates protease domain into 2 chains that remain connected through a disulfide bond and generates the active intermediate meizothrombin. The presence of cofactor Va directs activation along the meizothrombin pathway and greatly accelerates the rate of cleavage at Arg-364, but has a smaller effect on the cleavage of meizothrombin at Arg-315. Meizothrombin accumulates as an intermediate when prothrombinase is assembled on the membrane of red blood cells.

It carries out the reaction Selective cleavage of Arg-|-Gly bonds in fibrinogen to form fibrin and release fibrinopeptides A and B.. Activity is promoted in the presence of negatively charged surfaces, such as polyphosphate and dextran sulfate. Inhibited by SERPINA5. In terms of biological role, thrombin, which cleaves bonds after Arg and Lys, converts fibrinogen to fibrin and activates factors V, VII, VIII, XIII, and, in complex with thrombomodulin, protein C. Functions in blood homeostasis, inflammation and wound healing. Activates coagulation factor XI (F11); activation is promoted by the contact with negatively charged surfaces. Triggers the production of pro-inflammatory cytokines, such as MCP-1/CCL2 and IL8/CXCL8, in endothelial cells. This Sus scrofa (Pig) protein is Prothrombin (F2).